The primary structure comprises 411 residues: Dual-specificity RNA methyltransferase RlmN (411 aa).

Glu124 (proton acceptor) is an active-site residue. The region spanning 130-379 (EEGRGTLCIS…IRTPRGRDIL (250 aa)) is the Radical SAM core domain. A disulfide bridge connects residues Cys137 and Cys382. Residues Cys144, Cys148, and Cys151 each contribute to the [4Fe-4S] cluster site. Residues 208–209 (GE), Ser240, 262–264 (SLH), and Asn339 contribute to the S-adenosyl-L-methionine site. Catalysis depends on Cys382, which acts as the S-methylcysteine intermediate.

It belongs to the radical SAM superfamily. RlmN family. Requires [4Fe-4S] cluster as cofactor.

The protein resides in the cytoplasm. It carries out the reaction adenosine(2503) in 23S rRNA + 2 reduced [2Fe-2S]-[ferredoxin] + 2 S-adenosyl-L-methionine = 2-methyladenosine(2503) in 23S rRNA + 5'-deoxyadenosine + L-methionine + 2 oxidized [2Fe-2S]-[ferredoxin] + S-adenosyl-L-homocysteine. The catalysed reaction is adenosine(37) in tRNA + 2 reduced [2Fe-2S]-[ferredoxin] + 2 S-adenosyl-L-methionine = 2-methyladenosine(37) in tRNA + 5'-deoxyadenosine + L-methionine + 2 oxidized [2Fe-2S]-[ferredoxin] + S-adenosyl-L-homocysteine. In terms of biological role, specifically methylates position 2 of adenine 2503 in 23S rRNA and position 2 of adenine 37 in tRNAs. m2A2503 modification seems to play a crucial role in the proofreading step occurring at the peptidyl transferase center and thus would serve to optimize ribosomal fidelity. This Rhizobium meliloti (strain 1021) (Ensifer meliloti) protein is Dual-specificity RNA methyltransferase RlmN.